Consider the following 256-residue polypeptide: Pimeloyl-[acyl-carrier protein] methyl ester esterase (256 aa).

An AB hydrolase-1 domain is found at 15 to 242 (HLVLLHGWGL…AAHAPFISHP (228 aa)). Residues Trp-22, 82 to 83 (SL), and 143 to 147 (FLALQ) each bind substrate. Ser-82 serves as the catalytic Nucleophile. Residues Asp-207 and His-235 contribute to the active site. Residue His-235 participates in substrate binding.

Belongs to the AB hydrolase superfamily. Carboxylesterase BioH family. Monomer.

Its subcellular location is the cytoplasm. The enzyme catalyses 6-carboxyhexanoyl-[ACP] methyl ester + H2O = 6-carboxyhexanoyl-[ACP] + methanol + H(+). Its pathway is cofactor biosynthesis; biotin biosynthesis. In terms of biological role, the physiological role of BioH is to remove the methyl group introduced by BioC when the pimeloyl moiety is complete. It allows to synthesize pimeloyl-ACP via the fatty acid synthetic pathway through the hydrolysis of the ester bonds of pimeloyl-ACP esters. The protein is Pimeloyl-[acyl-carrier protein] methyl ester esterase of Shigella dysenteriae serotype 1 (strain Sd197).